The sequence spans 198 residues: Nucleoid occlusion factor SlmA (198 aa).

Residues 10 to 70 (NRREEILQSL…SLIEFIEDSL (61 aa)) form the HTH tetR-type domain. The segment at residues 33–52 (TTAKLAASVGVSEAALYRHF) is a DNA-binding region (H-T-H motif). Residues 117-144 (EQDRLQGRINQLFERIEAQLRQVLREKR) are a coiled coil.

The protein belongs to the nucleoid occlusion factor SlmA family. As to quaternary structure, homodimer. Interacts with FtsZ.

It localises to the cytoplasm. It is found in the nucleoid. Required for nucleoid occlusion (NO) phenomenon, which prevents Z-ring formation and cell division over the nucleoid. Acts as a DNA-associated cell division inhibitor that binds simultaneously chromosomal DNA and FtsZ, and disrupts the assembly of FtsZ polymers. SlmA-DNA-binding sequences (SBS) are dispersed on non-Ter regions of the chromosome, preventing FtsZ polymerization at these regions. This chain is Nucleoid occlusion factor SlmA, found in Salmonella typhi.